A 184-amino-acid polypeptide reads, in one-letter code: ATP synthase subunit b, chloroplastic (184 aa).

A helical transmembrane segment spans residues 27 to 49; sequence FATNPINLSVVLGVLIFFGKGVL.

The protein belongs to the ATPase B chain family. In terms of assembly, F-type ATPases have 2 components, F(1) - the catalytic core - and F(0) - the membrane proton channel. F(1) has five subunits: alpha(3), beta(3), gamma(1), delta(1), epsilon(1). F(0) has four main subunits: a(1), b(1), b'(1) and c(10-14). The alpha and beta chains form an alternating ring which encloses part of the gamma chain. F(1) is attached to F(0) by a central stalk formed by the gamma and epsilon chains, while a peripheral stalk is formed by the delta, b and b' chains.

It is found in the plastid. It localises to the chloroplast thylakoid membrane. Functionally, f(1)F(0) ATP synthase produces ATP from ADP in the presence of a proton or sodium gradient. F-type ATPases consist of two structural domains, F(1) containing the extramembraneous catalytic core and F(0) containing the membrane proton channel, linked together by a central stalk and a peripheral stalk. During catalysis, ATP synthesis in the catalytic domain of F(1) is coupled via a rotary mechanism of the central stalk subunits to proton translocation. In terms of biological role, component of the F(0) channel, it forms part of the peripheral stalk, linking F(1) to F(0). The sequence is that of ATP synthase subunit b, chloroplastic from Amborella trichopoda.